A 368-amino-acid polypeptide reads, in one-letter code: MELDECLERLYKAQLLPEVTVRALCFKLKEMLVKESNVIHIQTPVTVVGDMHGQFHDMLEIFQIGGPVPDTNYLFLGDYVDRGLYSVETIMLLIVLKLRYPSRIHLLRGNHESRQITQSYGFYTECLNKYGGNSRVWQYLTDIFDYLVLCCIIDDEIFCVHGGLSPNVQTIDQIKIIDRFREIPHDGAMADLVWSDPEENNNPTLDHPDNSGQHFQVSPRGAGYTFGRSVVEKFLRMNDMNRIYRAHQLCNEGYQIYFDGLVTTVWSAPNYCYRCGNKASILELYSKDQFYFNVFEEAPENKLLKENSMNDNALEDSISNPVANRKLIADYFEDDSASADGSTDPEMYIFSDVYQARSASNRHVDYFL.

Mn(2+) contacts are provided by Asp-50, His-52, Asp-78, and Asn-110. The Proton donor role is filled by His-111. Mn(2+) contacts are provided by His-161 and His-247.

Belongs to the PPP phosphatase family. PP-2A subfamily. As to quaternary structure, inactivated in a complex with phosphatase methylesterase PPE1 (PP2Ai). Interacts with phosphatase 2A activator RRD1, which can reactivate PP2Ai by dissociating the catalytic subunit from the complex. Interacts with TAP42. Mn(2+) is required as a cofactor. Post-translationally, reversibly methyl esterified on Leu-368 by leucine carboxyl methyltransferase 1 (PPM1) and protein phosphatase methylesterase 1 (PPE1). Carboxyl methylation influences the affinity of the catalytic subunit for the different regulatory subunits, thereby modulating the PP2A holoenzyme's substrate specificity, enzyme activity and cellular localization.

It catalyses the reaction O-phospho-L-seryl-[protein] + H2O = L-seryl-[protein] + phosphate. The catalysed reaction is O-phospho-L-threonyl-[protein] + H2O = L-threonyl-[protein] + phosphate. Functionally, involved in glycogen accumulation. The sequence is that of Serine/threonine-protein phosphatase PP2A-like PPG1 (PPG1) from Saccharomyces cerevisiae (strain ATCC 204508 / S288c) (Baker's yeast).